We begin with the raw amino-acid sequence, 257 residues long: Deoxyribose-phosphate aldolase (257 aa).

Asp-102 serves as the catalytic Proton donor/acceptor. Lys-166 serves as the catalytic Schiff-base intermediate with acetaldehyde. The active-site Proton donor/acceptor is the Lys-198.

The protein belongs to the DeoC/FbaB aldolase family. DeoC type 2 subfamily.

The protein localises to the cytoplasm. It carries out the reaction 2-deoxy-D-ribose 5-phosphate = D-glyceraldehyde 3-phosphate + acetaldehyde. Its pathway is carbohydrate degradation; 2-deoxy-D-ribose 1-phosphate degradation; D-glyceraldehyde 3-phosphate and acetaldehyde from 2-deoxy-alpha-D-ribose 1-phosphate: step 2/2. In terms of biological role, catalyzes a reversible aldol reaction between acetaldehyde and D-glyceraldehyde 3-phosphate to generate 2-deoxy-D-ribose 5-phosphate. The sequence is that of Deoxyribose-phosphate aldolase from Aeromonas hydrophila subsp. hydrophila (strain ATCC 7966 / DSM 30187 / BCRC 13018 / CCUG 14551 / JCM 1027 / KCTC 2358 / NCIMB 9240 / NCTC 8049).